Consider the following 787-residue polypeptide: Alpha-glucosidase 2 (787 aa).

Residues D407 and E410 contribute to the active site. Catalysis depends on D484, which acts as the Proton donor.

Belongs to the glycosyl hydrolase 31 family. In terms of assembly, homohexamer.

It carries out the reaction Hydrolysis of terminal, non-reducing (1-&gt;4)-linked alpha-D-glucose residues with release of alpha-D-glucose.. In Bacillus thermoamyloliquefaciens, this protein is Alpha-glucosidase 2.